A 176-amino-acid chain; its full sequence is Peptidyl-tRNA hydrolase (176 aa).

Tyrosine 14 provides a ligand contact to tRNA. The active-site Proton acceptor is the histidine 19. TRNA contacts are provided by tyrosine 65, asparagine 67, and asparagine 113.

Belongs to the PTH family. Monomer.

It localises to the cytoplasm. The catalysed reaction is an N-acyl-L-alpha-aminoacyl-tRNA + H2O = an N-acyl-L-amino acid + a tRNA + H(+). Its function is as follows. Hydrolyzes ribosome-free peptidyl-tRNAs (with 1 or more amino acids incorporated), which drop off the ribosome during protein synthesis, or as a result of ribosome stalling. Functionally, catalyzes the release of premature peptidyl moieties from peptidyl-tRNA molecules trapped in stalled 50S ribosomal subunits, and thus maintains levels of free tRNAs and 50S ribosomes. This is Peptidyl-tRNA hydrolase from Phytoplasma mali (strain AT).